We begin with the raw amino-acid sequence, 260 residues long: Trialysin (260 aa).

Residues 1 to 19 (MSKFWLLLLLVAAFQFAHS) form the signal peptide. Positions 20–55 (YPAAEYELDETTNDEVRQFIGDGYFEDEGDDGDEER) are cleaved as a propeptide — removed in mature form, probably by the serine protease triapsin.

The protein belongs to the redulysin-like family. Expressed in salivary glands.

Its subcellular location is the secreted. It localises to the target cell membrane. Its function is as follows. Pore-forming protein that induces lysis of T.cruzi trypomastigotes, bacteria E.coli and human red blood cells. The parasite lysis is much more important than the hemolysis, probably due to difference in membrane composition. Its action on protozoan parasites and bacteria may indicate a role in the control of microorganism growth in the salivary glands. The chain is Trialysin from Triatoma infestans (Assassin bug).